Reading from the N-terminus, the 684-residue chain is Acetophenone carboxylase delta subunit (684 aa).

Belongs to the oxoprolinase family. In terms of assembly, acetophenone carboxylase consists of five subunits; a heterooctameric subcomplex of two alpha (Apc1), two beta (Apc2), two gamma (Apc3) and two delta (Apc4) subunits assembles with the epsilon (Apc5) subunit in an unknown stoichiometry. It depends on Mg(2+) as a cofactor. Mn(2+) serves as cofactor.

The protein resides in the cytoplasm. It carries out the reaction acetophenone + hydrogencarbonate + 2 ATP + H2O = 3-oxo-3-phenylpropanoate + 2 ADP + 2 phosphate + 2 H(+). Its activity is regulated as follows. Inhibited by zinc ions, carbamoylphosphate and beta,gamma-imido-ATP. Functionally, catalyzes the carboxylation of acetophenone to form 3-oxo-3-phenylpropanoate (benzoylacetate) in the anaerobic catabolism of ethylbenzene. Also carboxylates propiophenone at the same rate and 4-acetyl-pyridine at lower rates. The polypeptide is Acetophenone carboxylase delta subunit (apc4) (Aromatoleum aromaticum (strain DSM 19018 / LMG 30748 / EbN1) (Azoarcus sp. (strain EbN1))).